Consider the following 435-residue polypeptide: Legumain (435 aa).

The first 17 residues, 1–17, serve as a signal peptide directing secretion; it reads MTWRVAVLLSLVLGAGA. Asn-93 carries N-linked (GlcNAc...) asparagine glycosylation. His-150 is a catalytic residue. Residue Asn-169 is glycosylated (N-linked (GlcNAc...) asparagine). Cys-191 functions as the Nucleophile in the catalytic mechanism. N-linked (GlcNAc...) asparagine glycans are attached at residues Asn-215, Asn-265, and Asn-274. The propeptide occupies 326–435; the sequence is NMKESQVLVG…AMDKVCLSHY (110 aa). 2 disulfides stabilise this stretch: Cys-380-Cys-414 and Cys-392-Cys-431.

This sequence belongs to the peptidase C13 family. Homodimer before autocatalytic removal of the propeptide. Monomer after autocatalytic processing. May interact with integrins. In terms of processing, activated by autocatalytic processing at pH 4. Detected in kidney cortex (at protein level).

The protein resides in the lysosome. The catalysed reaction is Hydrolysis of proteins and small molecule substrates at -Asn-|-Xaa- bonds.. In terms of biological role, has a strict specificity for hydrolysis of asparaginyl bonds. Can also cleave aspartyl bonds slowly, especially under acidic conditions. Involved in the processing of proteins for MHC class II antigen presentation in the lysosomal/endosomal system. Also involved in MHC class I antigen presentation in cross-presenting dendritic cells by mediating cleavage and maturation of Perforin-2 (MPEG1), thereby promoting antigen translocation in the cytosol. Required for normal lysosomal protein degradation in renal proximal tubules. Required for normal degradation of internalized EGFR. Plays a role in the regulation of cell proliferation via its role in EGFR degradation. The protein is Legumain (Lgmn) of Rattus norvegicus (Rat).